The following is a 275-amino-acid chain: Glutamate racemase (275 aa).

Substrate contacts are provided by residues aspartate 10–serine 11 and tyrosine 42–glycine 43. Cysteine 74 serves as the catalytic Proton donor/acceptor. Residue asparagine 75 to threonine 76 coordinates substrate. Cysteine 189 (proton donor/acceptor) is an active-site residue. Threonine 190 to histidine 191 is a binding site for substrate.

This sequence belongs to the aspartate/glutamate racemases family.

It carries out the reaction L-glutamate = D-glutamate. It participates in cell wall biogenesis; peptidoglycan biosynthesis. Provides the (R)-glutamate required for cell wall biosynthesis. This chain is Glutamate racemase, found in Bartonella tribocorum (strain CIP 105476 / IBS 506).